We begin with the raw amino-acid sequence, 318 residues long: tRNA pseudouridine synthase B (318 aa).

The active-site Nucleophile is Asp54.

Belongs to the pseudouridine synthase TruB family. Type 1 subfamily.

The catalysed reaction is uridine(55) in tRNA = pseudouridine(55) in tRNA. Its function is as follows. Responsible for synthesis of pseudouridine from uracil-55 in the psi GC loop of transfer RNAs. The sequence is that of tRNA pseudouridine synthase B from Ralstonia pickettii (strain 12J).